A 176-amino-acid polypeptide reads, in one-letter code: dCTP deaminase (176 aa).

DCTP-binding positions include 99–104 and Asp-115; that span reads RSTLAR. Glu-125 acts as the Proton donor/acceptor in catalysis. A dCTP-binding site is contributed by Gln-163.

This sequence belongs to the dCTP deaminase family. In terms of assembly, homotrimer.

The enzyme catalyses dCTP + H2O + H(+) = dUTP + NH4(+). Its pathway is pyrimidine metabolism; dUMP biosynthesis; dUMP from dCTP (dUTP route): step 1/2. Its function is as follows. Catalyzes the deamination of dCTP to dUTP. This chain is dCTP deaminase, found in Pyrobaculum arsenaticum (strain DSM 13514 / JCM 11321 / PZ6).